A 565-amino-acid chain; its full sequence is Adenine deaminase (565 aa).

Belongs to the metallo-dependent hydrolases superfamily. Adenine deaminase family. The cofactor is Mn(2+).

The catalysed reaction is adenine + H2O + H(+) = hypoxanthine + NH4(+). The protein is Adenine deaminase of Gluconobacter oxydans (strain 621H) (Gluconobacter suboxydans).